The chain runs to 328 residues: Aspartate carbamoyltransferase catalytic subunit (328 aa).

2 residues coordinate carbamoyl phosphate: arginine 70 and threonine 71. Lysine 98 serves as a coordination point for L-aspartate. Arginine 120, histidine 150, and glutamine 153 together coordinate carbamoyl phosphate. The L-aspartate site is built by arginine 183 and arginine 238. Residues glycine 279 and proline 280 each coordinate carbamoyl phosphate.

Belongs to the aspartate/ornithine carbamoyltransferase superfamily. ATCase family. In terms of assembly, heterododecamer (2C3:3R2) of six catalytic PyrB chains organized as two trimers (C3), and six regulatory PyrI chains organized as three dimers (R2).

It catalyses the reaction carbamoyl phosphate + L-aspartate = N-carbamoyl-L-aspartate + phosphate + H(+). Its pathway is pyrimidine metabolism; UMP biosynthesis via de novo pathway; (S)-dihydroorotate from bicarbonate: step 2/3. Its function is as follows. Catalyzes the condensation of carbamoyl phosphate and aspartate to form carbamoyl aspartate and inorganic phosphate, the committed step in the de novo pyrimidine nucleotide biosynthesis pathway. This is Aspartate carbamoyltransferase catalytic subunit from Methylococcus capsulatus (strain ATCC 33009 / NCIMB 11132 / Bath).